Consider the following 369-residue polypeptide: UPF0284 protein AM1_5137 (369 aa).

The protein belongs to the UPF0284 family.

The chain is UPF0284 protein AM1_5137 from Acaryochloris marina (strain MBIC 11017).